The following is a 487-amino-acid chain: MPCYSLMVQGTTSDAGKSTLVAALCRILKRRGVRVAPFKPQNMALNSAVTVDGGEIGRAQALQALACGLAPHTDFNPVLLKPTTDKKAQVIIHGKVAIDLDAKAYHAYKPRAMGAVLESWARLTAEYECVVVEGAGSPAEINLRDRDIANMGFAEAVDCPVIIVADIDRGGVFAHLVGTLELLSPSEKNRVKGFVINRFRGDIGLLESGLTWLEARTGKPVLGVLPYLHGLMLDAEDAIATAAVGGKKAAKLKVVAPAYPRVSNHNDLDPLRLHPEVDFRWIGPGETPPAADLIVLPGSKAVRADLDWLRAQGWDKAIHKHLRYGGKLIGLCGGYQMLGRMIHDPQGLEGQPGSTPGLGVLAVETTLEAEKQLRNVSGHLSLPGRPAMTGYEIHLGVTRGEGLAKGAVELADGVHDGAISADDQVFATYCHGVLDHPEALTALLAWAGMSESEQVDFAARREADLDRLADSVEAALDWEKLSALLPG.

A GATase cobBQ-type domain is found at 251–439 (KLKVVAPAYP…CHGVLDHPEA (189 aa)). Catalysis depends on Cys-332, which acts as the Nucleophile. Residue His-431 is part of the active site.

It belongs to the CobB/CobQ family. CobQ subfamily.

It functions in the pathway cofactor biosynthesis; adenosylcobalamin biosynthesis. Functionally, catalyzes amidations at positions B, D, E, and G on adenosylcobyrinic A,C-diamide. NH(2) groups are provided by glutamine, and one molecule of ATP is hydrogenolyzed for each amidation. The sequence is that of Cobyric acid synthase from Dechloromonas aromatica (strain RCB).